Here is a 294-residue protein sequence, read N- to C-terminus: MPRPVTVIDSNVTNAVHQVMDAMQAPVYFETYIIKGKNMNHLTWEVVDSIRKNKVCLNGRVNNSLCGGARKELDLFASLVDCFNLNGQPSRHENVDIVVIRENTEGEYAGREHEVVPGVIESFQVTMTKFWSDRIAKYAFEYAHFSKRKKVTAVHNNGKYEKLADAFFLESCQEVAKMYPNITYNEIASRETRAIRRHSNSKSLWAIIANIASGVAGGSFGDDYAIFEQVGSVGNHKNPVALLFSSVMMLRHLLLPLFADRLKTAVTRVISEGKCGNSNTTTQEVVDSVIANLD.

Belongs to the isocitrate and isopropylmalate dehydrogenases family.

Functionally, performs an essential role in the oxidative function of the citric acid cycle. The chain is Putative isocitrate dehydrogenase [NAD] subunit-like 4 (IDH4) from Arabidopsis thaliana (Mouse-ear cress).